The sequence spans 883 residues: DNA double-strand break repair Rad50 ATPase (883 aa).

Residues K12, 32-38 (NGSGKSS), and Q137 each bind ATP. The stretch at 244 to 283 (ERYEESRTALADVEETIADVREAVAEAERERETLADRVSD) forms a coiled coil. Disordered regions lie at residues 271–290 (ERERETLADRVSDHRERASD) and 305–326 (DDPDAEDASAERDAVADQREAV). A compositionally biased stretch (basic and acidic residues) spans 313 to 326 (SAERDAVADQREAV). Coiled coils occupy residues 336–389 (AVSR…IEAL) and 414–452 (LDDATAERDELRERVATLRADRQSAADRVAEAEALLDEG). The region spanning 407-506 (FGAAEAFLDD…RVDRGESLVA (100 aa)) is the Zinc-hook domain. Residues C454 and C457 each contribute to the Zn(2+) site. The segment at 508–565 (EDRVDDLEQQRERAVERRDEQADIADAKRDQAAEKRDRAADLDAEAEDARADAAAKRD) is disordered. Coiled coils occupy residues 571-604 (RETLAALNADQTALKERLDALADLVDRLEAAADA) and 668-720 (KLQA…VTAL).

Belongs to the SMC family. RAD50 subfamily. In terms of assembly, homodimer. Forms a heterotetramer composed of two Mre11 subunits and two Rad50 subunits. Zn(2+) is required as a cofactor.

Part of the Rad50/Mre11 complex, which is involved in the early steps of DNA double-strand break (DSB) repair. Rad50 controls the balance between DNA end bridging and DNA resection via ATP-dependent structural rearrangements of the Rad50/Mre11 complex. The chain is DNA double-strand break repair Rad50 ATPase from Halobacterium salinarum (strain ATCC 700922 / JCM 11081 / NRC-1) (Halobacterium halobium).